A 154-amino-acid chain; its full sequence is Prefoldin subunit alpha (154 aa).

The protein belongs to the prefoldin alpha subunit family. As to quaternary structure, heterohexamer of two alpha and four beta subunits.

It localises to the cytoplasm. Its function is as follows. Molecular chaperone capable of stabilizing a range of proteins. Seems to fulfill an ATP-independent, HSP70-like function in archaeal de novo protein folding. This chain is Prefoldin subunit alpha, found in Hyperthermus butylicus (strain DSM 5456 / JCM 9403 / PLM1-5).